The chain runs to 360 residues: uncharacterized protein (360 aa).

The THUMP domain maps to 45 to 148 (EDIEDKILQI…KNKTYVSITP (104 aa)).

This is an uncharacterized protein from Methanocaldococcus jannaschii (strain ATCC 43067 / DSM 2661 / JAL-1 / JCM 10045 / NBRC 100440) (Methanococcus jannaschii).